The following is a 284-amino-acid chain: Tetraspanin-10 (284 aa).

The Cytoplasmic segment spans residues 1–11 (MGMGTSTFVIR). The chain crosses the membrane as a helical span at residues 12 to 32 (WVNLLTMLLAVAVIIFGVWMS). Residues 33–43 (THNDGCRRSLT) are Extracellular-facing. A helical membrane pass occupies residues 44-64 (FPVIALGGFIFLISIIGFLGA). The Cytoplasmic segment spans residues 65 to 75 (CKRSVALLWIY). Residues 76 to 96 (LAVLLIVLIAILVFTVLAFIV) form a helical membrane-spanning segment. Over 97–228 (TNNGSGHTNP…AGVAQYMKTE (132 aa)) the chain is Extracellular. 3 N-linked (GlcNAc...) asparagine glycosylation sites follow: asparagine 99, asparagine 128, and asparagine 183. The helical transmembrane segment at 229 to 249 (WRLVAIFNVVLFVVLISSLLS) threads the bilayer. Topologically, residues 250–284 (TRFDSEQSFGLLNGLVQISNITFKDCQTTTVPKQF) are cytoplasmic.

The protein belongs to the tetraspanin (TM4SF) family.

The protein resides in the membrane. May be involved in the regulation of cell differentiation. The protein is Tetraspanin-10 (TET10) of Arabidopsis thaliana (Mouse-ear cress).